We begin with the raw amino-acid sequence, 142 residues long: MSLTRTERTIILSLWSKISTQADVIGTETLERLFSCYPQAKTYFPHFDLHSGSAQLRAHGSKVVAAVGDAVKSIDNVTSALSKLSELHAYVLRVDPVNFKFLSHCLLVTLASHFPADFTADAHAAWDKFLSIVSGVLTEKYR.

S2 bears the N-acetylserine mark. Positions 2 to 142 constitute a Globin domain; that stretch reads SLTRTERTII…VSGVLTEKYR (141 aa). The residue at position 29 (T29) is a Phosphothreonine. S53 is subject to Phosphoserine. H59 is a binding site for heme b. Residues S73 and S82 each carry the phosphoserine modification. H88 is a heme b binding site.

The protein belongs to the globin family. In terms of assembly, heterotetramer of two zeta chains and beta-type chains.

Functionally, the zeta chain is an alpha-type chain of mammalian embryonic hemoglobin. This chain is Hemoglobin subunit zeta (HBZ1), found in Capra hircus (Goat).